The primary structure comprises 902 residues: Gamma-tubulin complex component 2 (902 aa).

Tyr83 is modified (phosphotyrosine). Positions 874–902 (AERSQKATPQVPVLRGPPAPAPRVAVTAQ) are disordered.

It belongs to the TUBGCP family. In terms of assembly, component of the gamma-tubulin ring complex (gTuRC) consisting of TUBGCP2, TUBGCP3, TUBGCP4, TUBGCP5 and TUBGCP6 and gamma-tubulin TUBG1 or TUBG2. TUBGCP2, TUBGCP3, TUBGCP4, TUBGCP5 and TUBGCP6 assemble in a 5:5:2:1:1 stoichiometry; each is associated with a gamma-tubulin, thereby arranging 14 gamma-tubulins in a helical manner. Gamma-tubulin at the first position is blocked by TUBGCP3 at the last position, allowing 13 protafilaments to grow into a microtubule. The gTuRC (via TUBGCP3 and TUBGCP6) interacts with ACTB and MZT1; the interactions form a luminal bridge that stabilizes the initial structure during complex assembly. The gTuRC (via TUBGCP2) interacts with MZT2A/MZT2B and CDK5RAP2 (via CM1 motif); the interactions play a role in gTuRC activation. Interacts with ATF5; the ATF5:PCNT:polyglutamylated tubulin (PGT) tripartite unites the mother centriole and the pericentriolar material (PCM) in the centrosome. In terms of tissue distribution, ubiquitously expressed.

It localises to the cytoplasm. The protein localises to the cytoskeleton. Its subcellular location is the microtubule organizing center. The protein resides in the centrosome. In terms of biological role, component of the gamma-tubulin ring complex (gTuRC) which mediates microtubule nucleation. The gTuRC regulates the minus-end nucleation of alpha-beta tubulin heterodimers that grow into microtubule protafilaments, a critical step in centrosome duplication and spindle formation. Plays a role in neuronal migration. The chain is Gamma-tubulin complex component 2 (TUBGCP2) from Homo sapiens (Human).